The sequence spans 433 residues: Glutamate-1-semialdehyde 2,1-aminomutase (433 aa).

Residue Lys269 is modified to N6-(pyridoxal phosphate)lysine.

The protein belongs to the class-III pyridoxal-phosphate-dependent aminotransferase family. HemL subfamily. Homodimer. Pyridoxal 5'-phosphate is required as a cofactor.

Its subcellular location is the cytoplasm. It catalyses the reaction (S)-4-amino-5-oxopentanoate = 5-aminolevulinate. Its pathway is porphyrin-containing compound metabolism; protoporphyrin-IX biosynthesis; 5-aminolevulinate from L-glutamyl-tRNA(Glu): step 2/2. In Francisella philomiragia subsp. philomiragia (strain ATCC 25017 / CCUG 19701 / FSC 153 / O#319-036), this protein is Glutamate-1-semialdehyde 2,1-aminomutase.